The primary structure comprises 529 residues: Delayed-rectifier potassium channel regulatory subunit KCNS1 (529 aa).

Residues 1–217 are Cytoplasmic-facing; that stretch reads MLMLLVRGTR…LTMENPGYSL (217 aa). A helical membrane pass occupies residues 218–239; the sequence is PSKLFSCVSISVVLASIAAMCI. The Extracellular segment spans residues 240–270; sequence HSLPEYQAREAAAAVAAVAAGRSPEGVRDDP. Residues 271-293 traverse the membrane as a helical segment; it reads VLRRLEYFCIAWFSFEVSSRLLL. Residues 294 to 304 lie on the Cytoplasmic side of the membrane; it reads APSTRNFFCHP. The helical transmembrane segment at 305–322 threads the bilayer; the sequence is LNLIDIVSVLPFYLTLLA. The Extracellular portion of the chain corresponds to 323 to 340; the sequence is GVALGDQGGTGGKELGHL. A helical; Voltage-sensor transmembrane segment spans residues 341–361; it reads GKVVQVFRLMRIFRVLKLARH. Over 362-376 the chain is Cytoplasmic; the sequence is STGLRSLGATLKHSY. A helical membrane pass occupies residues 377–398; sequence REVGILLLYLAVGVSVFSGVAY. The Extracellular segment spans residues 399-411; it reads TAEKEEDVGFNTI. The helical intramembrane region spans 412 to 423; sequence PACWWWGTVSMT. The short motif at 424–429 is the Selectivity filter element; sequence TVGYGD. The stretch at 424–431 is an intramembrane region; that stretch reads TVGYGDVV. Residues 432 to 438 lie on the Extracellular side of the membrane; it reads PVTVAGK. The helical transmembrane segment at 439–467 threads the bilayer; that stretch reads LAASGCILGGILVVALPITIIFNKFSHFY. The Cytoplasmic segment spans residues 468–529; sequence RRQKALEAAV…PSEPPHPQMY (62 aa). Residues 500–529 are disordered; sequence LETSREISQEGRSADLETQAPSEPPHPQMY. The span at 502 to 514 shows a compositional bias: basic and acidic residues; sequence TSREISQEGRSAD.

It belongs to the potassium channel family. S (TC 1.A.1.2) subfamily. Kv9.1/KCNS1 sub-subfamily. Heterotetramer with KCNB1. Heterotetramer with KCNB2. Does not form homomultimers.

It is found in the cell membrane. Its function is as follows. Potassium channel regulatory subunit that modulate the delayed rectifier voltage-gated potassium channel activity of KCNB1 and KCNB2 by altering their kinetics, expression levels, and shifting the half-inactivation potential to more polarized values. While it does not form functional channels on its own, it can form functional heterotetrameric channels with KCNB1 and KCNB2. Each regulatory subunit has unique regulatory properties that can lead to extensive inhibition, significant changes in kinetics, and/or substantial shifts in the voltage dependencies of the inactivation process. The protein is Delayed-rectifier potassium channel regulatory subunit KCNS1 of Colobus guereza (Mantled guereza).